Reading from the N-terminus, the 493-residue chain is Activin receptor type-1C (493 aa).

An N-terminal signal peptide occupies residues 1 to 25 (MTPARRSALSLALLLVALASDLAAG). At 26–113 (LKCVCLLCDS…PDAPRLGPTE (88 aa)) the chain is on the extracellular side. The helical transmembrane segment at 114–134 (LTVVITVPVCLLSIAAMLTIW) threads the bilayer. Residues 135–493 (ACQDRQCTYR…QLCVKEDCKA (359 aa)) lie on the Cytoplasmic side of the membrane. The region spanning 165-194 (KTLKDLIYDATASGSGSGPPLLVQRTIART) is the GS domain. The Protein kinase domain maps to 195–485 (IVLQEIVGKG…LRVKKTISQL (291 aa)). ATP-binding positions include 201 to 209 (VGKGRFGEV) and Lys-222. Asp-323 serves as the catalytic Proton acceptor.

This sequence belongs to the protein kinase superfamily. TKL Ser/Thr protein kinase family. TGFB receptor subfamily. In terms of assembly, binds the type 2 receptor protein ACVR2A. Mg(2+) serves as cofactor. It depends on Mn(2+) as a cofactor. In terms of tissue distribution, expressed in brain, kidney, lung, liver, testis, ovary, adrenal gland, heart, prostate, gastrointestinal tract, and spleen. Distributed throughout both adult and embryonic central nervous system and pancreatic islet cells.

It localises to the membrane. It carries out the reaction L-threonyl-[receptor-protein] + ATP = O-phospho-L-threonyl-[receptor-protein] + ADP + H(+). The catalysed reaction is L-seryl-[receptor-protein] + ATP = O-phospho-L-seryl-[receptor-protein] + ADP + H(+). Serine/threonine protein kinase which forms a receptor complex on ligand binding. The receptor complex consists of 2 type II and 2 type I transmembrane serine/threonine kinases. Type II receptors phosphorylate and activate type I receptors which autophosphorylate, then bind and activate SMAD transcriptional regulators, SMAD2 and SMAD3. Receptor for activin AB, activin B, activin E and NODAL. Upon NODAL binding, activation results in increased apoptosis and reduced proliferation through suppression of AKT signaling and the activation of Smad2-dependent signaling pathway in pancreatic beta-cells, trophoblasts, epithelial or neuronal cells. Acts as a positive regulator for macrophage activation partially through down-regulation of PPARG expression. This is Activin receptor type-1C from Rattus norvegicus (Rat).